A 486-amino-acid chain; its full sequence is Iron-sulfur cluster assembly SufBD family protein ycf24 (486 aa).

Belongs to the iron-sulfur cluster assembly SufBD family.

The protein localises to the plastid. It is found in the chloroplast. This chain is Iron-sulfur cluster assembly SufBD family protein ycf24 (ycf24), found in Trieres chinensis (Marine centric diatom).